The following is a 158-amino-acid chain: uncharacterized protein (158 aa).

The next 2 helical transmembrane spans lie at 10 to 30 (LFFI…LNHF) and 40 to 60 (YITF…NFFL).

It is found in the membrane. This is an uncharacterized protein from Schizosaccharomyces pombe (strain 972 / ATCC 24843) (Fission yeast).